Reading from the N-terminus, the 119-residue chain is Dihydroneopterin aldolase (119 aa).

Substrate is bound by residues E21, Y53, and 72-73 (VE). K98 functions as the Proton donor/acceptor in the catalytic mechanism.

It belongs to the DHNA family.

It carries out the reaction 7,8-dihydroneopterin = 6-hydroxymethyl-7,8-dihydropterin + glycolaldehyde. It functions in the pathway cofactor biosynthesis; tetrahydrofolate biosynthesis; 2-amino-4-hydroxy-6-hydroxymethyl-7,8-dihydropteridine diphosphate from 7,8-dihydroneopterin triphosphate: step 3/4. Its function is as follows. Catalyzes the conversion of 7,8-dihydroneopterin to 6-hydroxymethyl-7,8-dihydropterin. In Streptomyces coelicolor (strain ATCC BAA-471 / A3(2) / M145), this protein is Dihydroneopterin aldolase (folB).